We begin with the raw amino-acid sequence, 669 residues long: Alpha-1,4-glucan:maltose-1-phosphate maltosyltransferase 2 (669 aa).

The alpha-maltose 1-phosphate site is built by K255, Q315, and D350. D385 functions as the Nucleophile in the catalytic mechanism. N386 is an alpha-maltose 1-phosphate binding site. E414 functions as the Proton donor in the catalytic mechanism. 525-526 (KY) provides a ligand contact to alpha-maltose 1-phosphate.

It belongs to the glycosyl hydrolase 13 family. GlgE subfamily. In terms of assembly, homodimer.

The enzyme catalyses alpha-maltose 1-phosphate + [(1-&gt;4)-alpha-D-glucosyl](n) = [(1-&gt;4)-alpha-D-glucosyl](n+2) + phosphate. In terms of biological role, maltosyltransferase that uses maltose 1-phosphate (M1P) as the sugar donor to elongate linear or branched alpha-(1-&gt;4)-glucans. Maltooligosaccharides with a degree of polymerization (DP) superior or equal to 4 are efficient acceptors, with DP6 being optimal in the GlgE-catalyzed polymerization with M1P. Is probably involved in a branched alpha-glucan biosynthetic pathway from trehalose, together with TreS, Mak and GlgB. This Streptomyces coelicolor (strain ATCC BAA-471 / A3(2) / M145) protein is Alpha-1,4-glucan:maltose-1-phosphate maltosyltransferase 2 (glgE2).